We begin with the raw amino-acid sequence, 373 residues long: SH3 domain-binding protein 5-like (373 aa).

Residues 1–53 are disordered; that stretch reads MEGKEGPSCEVRLPTPGAEREGPIHPELGAFGETASNTIKLSESSNDGKKEEI. Positions 34–45 are enriched in polar residues; the sequence is TASNTIKLSESS. 2 coiled-coil regions span residues 55–98 and 170–272; these read EELD…ESAR and WQEM…SEEI. Disordered regions lie at residues 276-305 and 344-373; these read RTQSSLLSQRAPPLGAEAPPSVKDGETGPP and TGAVECGGSRERGGDRGTGGAFRHHRSVSL. The span at 344 to 358 shows a compositional bias: basic and acidic residues; it reads TGAVECGGSRERGGD.

This sequence belongs to the SH3BP5 family.

In terms of biological role, functions as a guanine nucleotide exchange factor (GEF) for rab11a. The polypeptide is SH3 domain-binding protein 5-like (sh3bp5l) (Xenopus tropicalis (Western clawed frog)).